The sequence spans 57 residues: UPF0509 protein YciZ (57 aa).

It belongs to the UPF0509 family.

The chain is UPF0509 protein YciZ (yciZ) from Escherichia coli O157:H7.